The primary structure comprises 156 residues: Endoribonuclease YbeY (156 aa).

Positions 117, 121, and 127 each coordinate Zn(2+).

This sequence belongs to the endoribonuclease YbeY family. Zn(2+) serves as cofactor.

It is found in the cytoplasm. Single strand-specific metallo-endoribonuclease involved in late-stage 70S ribosome quality control and in maturation of the 3' terminus of the 16S rRNA. This chain is Endoribonuclease YbeY, found in Shewanella frigidimarina (strain NCIMB 400).